The sequence spans 348 residues: MSNCELTVLKPAEVKLSPRDREGIINPMYDCQPAGAQYAGIGIKDCIPLVHGGQGCTMFVRLLFAQHFKENFDVASTSLHEESAVFGGAKRVEEGVLVLARRYPNLRVIPIITTCSTEVIGDDIEGSIRVCNRALEAEFPDRKIYLAPVHTPSFKGSHVTGYAECVKSVFKTITDAHGKGQPSGKLNVFPGWVNPGDVVLLKHYFKEMDVEANIYMDTEDFDSPMLPNKSIETHGRTTVEDIADSANALATLSLARYEGNTTGELLQKTFAVPNALVNTPYGIKNTDDMLRKIAEVTGKEIPESLVRERGIALDALADLAHMFFANKKVAIFGHPDLVLGLAQFCIEV.

Cys-31, Cys-56, Cys-115, and Ser-153 together coordinate [8Fe-7S] cluster.

It belongs to the NifD/NifK/NifE/NifN family. As to quaternary structure, hexamer of two alpha, two beta, and two delta chains. [8Fe-7S] cluster serves as cofactor.

The catalysed reaction is N2 + 8 reduced [2Fe-2S]-[ferredoxin] + 16 ATP + 16 H2O = H2 + 8 oxidized [2Fe-2S]-[ferredoxin] + 2 NH4(+) + 16 ADP + 16 phosphate + 6 H(+). Its function is as follows. This vanadium-iron protein is part of the nitrogenase complex that catalyzes the key enzymatic reactions in nitrogen fixation. This Azorhizophilus paspali (Azotobacter paspali) protein is Nitrogenase vanadium-iron protein beta chain (vnfK).